The primary structure comprises 136 residues: MPARADVRLAPRQRLTRGLKYTAVGPVDITRGVLGIGADTAQATAAELRRRYASGKLQRQLAAAAEAVAALPETIQEAVQEVVSPPKKRRRRPLLIAAVAVTVLGGGAAAFSIVRRRSRPQEPPTLAPSVEVAPKP.

The chain crosses the membrane as a helical span at residues 94–114; that stretch reads LLIAAVAVTVLGGGAAAFSIV.

The protein belongs to the CwsA family. As to quaternary structure, interacts with CrgA and Wag31.

It is found in the cell membrane. In terms of biological role, required for regulated cell division, cell wall synthesis and the maintenance of cell shape. This Mycolicibacterium smegmatis (strain ATCC 700084 / mc(2)155) (Mycobacterium smegmatis) protein is Cell wall synthesis protein CwsA.